A 716-amino-acid polypeptide reads, in one-letter code: Probable basic-leucine zipper transcription factor O (716 aa).

Residues 20–142 (LLDDFSQLQQ…YQQRQQQYQD (123 aa)) adopt a coiled-coil conformation. Positions 173-233 (SINYNMNNNN…NNKTTDNINN (61 aa)) are disordered. The bZIP domain occupies 381–444 (KSTESIKKMN…SVDLMKPSND (64 aa)). Residues 387–403 (KKMNQNKASRNYRQKKK) are basic motif. Residues 406–413 (IKEIEDKL) form a leucine-zipper region.

This sequence belongs to the bZIP family.

The protein resides in the nucleus. In terms of biological role, probable transcriptional regulator. The chain is Probable basic-leucine zipper transcription factor O (bzpO) from Dictyostelium discoideum (Social amoeba).